We begin with the raw amino-acid sequence, 255 residues long: Aquaporin TIP4-1 (255 aa).

The next 2 helical transmembrane spans lie at A25–M45 and T61–F81. The NPA 1 signature appears at N89 to A91. The next 3 membrane-spanning stretches (helical) occupy residues V108–L128, G148–L168, and A176–F196. An NPA 2 motif is present at residues N202–A204. Residues W223–V243 traverse the membrane as a helical segment.

The protein belongs to the MIP/aquaporin (TC 1.A.8) family. TIP (TC 1.A.8.10) subfamily.

It is found in the vacuole membrane. Aquaporins facilitate the transport of water and small neutral solutes across cell membranes. This chain is Aquaporin TIP4-1 (TIP4-1), found in Zea mays (Maize).